The primary structure comprises 318 residues: Pantothenate kinase (318 aa).

96-103 provides a ligand contact to ATP; it reads GSVSVGKS.

It belongs to the prokaryotic pantothenate kinase family.

The protein resides in the cytoplasm. The catalysed reaction is (R)-pantothenate + ATP = (R)-4'-phosphopantothenate + ADP + H(+). The protein operates within cofactor biosynthesis; coenzyme A biosynthesis; CoA from (R)-pantothenate: step 1/5. This is Pantothenate kinase from Bradyrhizobium sp. (strain BTAi1 / ATCC BAA-1182).